The following is a 97-amino-acid chain: MPPKESPFKVNLKIIPSARKNELAGYENGLLKLKIAAQPEKGKANKELIDYLSDLLDTPKAEIEICHGHTGRNKVLAFFTLSQADFEAKISAALHGS.

This sequence belongs to the UPF0235 family.

The protein is UPF0235 protein cbdbA1230 of Dehalococcoides mccartyi (strain CBDB1).